A 296-amino-acid polypeptide reads, in one-letter code: Undecaprenyl-diphosphatase (296 aa).

7 helical membrane-spanning segments follow: residues S48–F68, L104–D124, L131–A151, I167–F187, S208–V228, S237–I257, and F272–I292.

This sequence belongs to the UppP family.

It is found in the cell membrane. It carries out the reaction di-trans,octa-cis-undecaprenyl diphosphate + H2O = di-trans,octa-cis-undecaprenyl phosphate + phosphate + H(+). Catalyzes the dephosphorylation of undecaprenyl diphosphate (UPP). Confers resistance to bacitracin. The protein is Undecaprenyl-diphosphatase of Staphylococcus carnosus (strain TM300).